The primary structure comprises 77 residues: Translation initiation factor IF-1, chloroplastic (77 aa).

The S1-like domain occupies 1–71 (MKEQKWTHEG…TRGRIIYRLR (71 aa)).

It belongs to the IF-1 family. As to quaternary structure, component of the 30S ribosomal translation pre-initiation complex which assembles on the 30S ribosome in the order IF-2 and IF-3, IF-1 and N-formylmethionyl-tRNA(fMet); mRNA recruitment can occur at any time during PIC assembly.

The protein resides in the plastid. It localises to the chloroplast. In terms of biological role, one of the essential components for the initiation of protein synthesis. Stabilizes the binding of IF-2 and IF-3 on the 30S subunit to which N-formylmethionyl-tRNA(fMet) subsequently binds. Helps modulate mRNA selection, yielding the 30S pre-initiation complex (PIC). Upon addition of the 50S ribosomal subunit IF-1, IF-2 and IF-3 are released leaving the mature 70S translation initiation complex. The polypeptide is Translation initiation factor IF-1, chloroplastic (Coffea arabica (Arabian coffee)).